The chain runs to 1131 residues: Chitin synthase 1 (1131 aa).

Basic and acidic residues predominate over residues 1-20; the sequence is MSDQNNRSRNEYHSNRKNEP. Residues 1–22 form a disordered region; the sequence is MSDQNNRSRNEYHSNRKNEPSY. Phosphoserine is present on residues Ser34, Ser35, Ser270, Ser299, and Ser318. The segment at 282–305 is disordered; that stretch reads YLHDDSRPVNDGKEELDSVKSGYS. Thr328 is subject to Phosphothreonine. Ser358 bears the Phosphoserine mark. 7 helical membrane-spanning segments follow: residues 795–815, 833–853, 866–886, 914–934, 942–962, 1042–1062, and 1101–1121; these read FFYLFFNTLISWFSLSSFFLV, VLSVIFLWLYGICTLSTFILS, VLTCVIFAVMMIYMIFCSIFM, IVISLGSTYCLYLISSIIYLQ, FIQYILLSPSYINVLNIYAFC, LVIIFWVITNFIIVAVVLETG, and ILWLVALSALIRFIGCSIYMI.

The protein belongs to the chitin synthase family.

The protein resides in the cell membrane. The catalysed reaction is [(1-&gt;4)-N-acetyl-beta-D-glucosaminyl](n) + UDP-N-acetyl-alpha-D-glucosamine = [(1-&gt;4)-N-acetyl-beta-D-glucosaminyl](n+1) + UDP + H(+). Its activity is regulated as follows. Requires proteolytic activation. Polymerizes chitin, a structural polymer of the cell wall and septum, by transferring the sugar moiety of UDP-GlcNAc to the non-reducing end of the growing chitin polymer. Required for mitotic division septum formation during adverse conditions. This Saccharomyces cerevisiae (strain ATCC 204508 / S288c) (Baker's yeast) protein is Chitin synthase 1 (CHS1).